The sequence spans 245 residues: MECVMKYKRILLKLSGEGLSNKKKSLLIDYEIVKNIAIQLQKIHKQGYEVAIVVGGGNFWRGESASKNGIPRTRADYIGMLATTMNALALQSGFESVGLKARVQSSLSIDGKVAENYITEKAKHYLSNGEIVIFAGGTGRPFFTTDTAATLVASEMQCDVLLMAKNGVNGVYDADPKVSPSAIKFDSLSYDELLHIVLTNGLKIMDSTSVTMAKENNIKILVFDIQEKDSILKVLEGNAEHTKVE.

Lys-13–Gly-16 provides a ligand contact to ATP. Gly-56 serves as a coordination point for UMP. ATP-binding residues include Gly-57 and Arg-61. Residues Asp-76 and Thr-138–Thr-145 contribute to the UMP site. Residues Asn-166, Tyr-172, and Asp-175 each coordinate ATP.

This sequence belongs to the UMP kinase family. As to quaternary structure, homohexamer.

The protein localises to the cytoplasm. The catalysed reaction is UMP + ATP = UDP + ADP. It functions in the pathway pyrimidine metabolism; CTP biosynthesis via de novo pathway; UDP from UMP (UMPK route): step 1/1. Its activity is regulated as follows. Inhibited by UTP. Its function is as follows. Catalyzes the reversible phosphorylation of UMP to UDP. This Mycoplasma mobile (strain ATCC 43663 / 163K / NCTC 11711) (Mesomycoplasma mobile) protein is Uridylate kinase.